The primary structure comprises 333 residues: Transaldolase (333 aa).

Lysine 135 (schiff-base intermediate with substrate) is an active-site residue.

The protein belongs to the transaldolase family. Type 1 subfamily. As to quaternary structure, homodimer.

The protein localises to the cytoplasm. It carries out the reaction D-sedoheptulose 7-phosphate + D-glyceraldehyde 3-phosphate = D-erythrose 4-phosphate + beta-D-fructose 6-phosphate. The protein operates within carbohydrate degradation; pentose phosphate pathway; D-glyceraldehyde 3-phosphate and beta-D-fructose 6-phosphate from D-ribose 5-phosphate and D-xylulose 5-phosphate (non-oxidative stage): step 2/3. Its function is as follows. Transaldolase is important for the balance of metabolites in the pentose-phosphate pathway. The sequence is that of Transaldolase from Prochlorococcus marinus subsp. pastoris (strain CCMP1986 / NIES-2087 / MED4).